Reading from the N-terminus, the 371-residue chain is Cytochrome b (371 aa).

The next 4 helical transmembrane spans lie at 25 to 45, 69 to 90, 105 to 125, and 170 to 190; these read FGSLLLTCLMLQILTGFFLAI, WIMQNTHAIGASLFFICIYTHI, WLSGTTLLIILMATAFFGYVL, and FFALHFILPFIIISMSSIHII. Heme b-binding residues include His75 and His89. Heme b-binding residues include His174 and His188. His193 is a binding site for a ubiquinone. The next 4 membrane-spanning stretches (helical) occupy residues 218–238, 280–300, 312–332, and 339–358; these read YKDMTMVSIMIMLLLMVMTFA, LGGTLALFLSIIILTTTPFTH, LTQILFWTLIATFTTITWTAT, and FIYISQMTSIMYFSFFIMNP.

This sequence belongs to the cytochrome b family. The cytochrome bc1 complex contains 3 respiratory subunits (MT-CYB, CYC1 and UQCRFS1), 2 core proteins (UQCRC1 and UQCRC2) and probably 6 low-molecular weight proteins. Heme b serves as cofactor.

It localises to the mitochondrion inner membrane. In terms of biological role, component of the ubiquinol-cytochrome c reductase complex (complex III or cytochrome b-c1 complex) that is part of the mitochondrial respiratory chain. The b-c1 complex mediates electron transfer from ubiquinol to cytochrome c. Contributes to the generation of a proton gradient across the mitochondrial membrane that is then used for ATP synthesis. The polypeptide is Cytochrome b (MT-CYB) (Micruroides euryxanthus (Sonoran coral snake)).